The following is a 154-amino-acid chain: Crossover junction endodeoxyribonuclease RuvC (154 aa).

Residues D7, E67, and D139 contribute to the active site. The Mg(2+) site is built by D7, E67, and D139.

This sequence belongs to the RuvC family. As to quaternary structure, homodimer which binds Holliday junction (HJ) DNA. The HJ becomes 2-fold symmetrical on binding to RuvC with unstacked arms; it has a different conformation from HJ DNA in complex with RuvA. In the full resolvosome a probable DNA-RuvA(4)-RuvB(12)-RuvC(2) complex forms which resolves the HJ. Mg(2+) is required as a cofactor.

Its subcellular location is the cytoplasm. The enzyme catalyses Endonucleolytic cleavage at a junction such as a reciprocal single-stranded crossover between two homologous DNA duplexes (Holliday junction).. In terms of biological role, the RuvA-RuvB-RuvC complex processes Holliday junction (HJ) DNA during genetic recombination and DNA repair. Endonuclease that resolves HJ intermediates. Cleaves cruciform DNA by making single-stranded nicks across the HJ at symmetrical positions within the homologous arms, yielding a 5'-phosphate and a 3'-hydroxyl group; requires a central core of homology in the junction. The consensus cleavage sequence is 5'-(A/T)TT(C/G)-3'. Cleavage occurs on the 3'-side of the TT dinucleotide at the point of strand exchange. HJ branch migration catalyzed by RuvA-RuvB allows RuvC to scan DNA until it finds its consensus sequence, where it cleaves and resolves the cruciform DNA. This chain is Crossover junction endodeoxyribonuclease RuvC, found in Synechococcus sp. (strain CC9605).